The primary structure comprises 396 residues: Elongation factor Tu (396 aa).

One can recognise a tr-type G domain in the interval 10-206 (KPHVNVGTIG…ALDSYIPEPE (197 aa)). Residues 19–26 (GHVDHGKT) form a G1 region. 19 to 26 (GHVDHGKT) contributes to the GTP binding site. Thr-26 is a binding site for Mg(2+). The interval 60 to 64 (GITIN) is G2. A G3 region spans residues 81-84 (DCPG). GTP-binding positions include 81–85 (DCPGH) and 136–139 (NKAD). Residues 136 to 139 (NKAD) form a G4 region. Residues 174–176 (SAL) are G5.

Belongs to the TRAFAC class translation factor GTPase superfamily. Classic translation factor GTPase family. EF-Tu/EF-1A subfamily. As to quaternary structure, monomer.

It localises to the cytoplasm. It carries out the reaction GTP + H2O = GDP + phosphate + H(+). In terms of biological role, GTP hydrolase that promotes the GTP-dependent binding of aminoacyl-tRNA to the A-site of ribosomes during protein biosynthesis. The chain is Elongation factor Tu from Nitrosomonas europaea (strain ATCC 19718 / CIP 103999 / KCTC 2705 / NBRC 14298).